Here is a 287-residue protein sequence, read N- to C-terminus: Ribosomal RNA small subunit methyltransferase A (287 aa).

S-adenosyl-L-methionine is bound by residues Asn18, Leu20, Gly45, Glu66, Asp91, and Asn118.

It belongs to the class I-like SAM-binding methyltransferase superfamily. rRNA adenine N(6)-methyltransferase family. RsmA subfamily.

It is found in the cytoplasm. The catalysed reaction is adenosine(1518)/adenosine(1519) in 16S rRNA + 4 S-adenosyl-L-methionine = N(6)-dimethyladenosine(1518)/N(6)-dimethyladenosine(1519) in 16S rRNA + 4 S-adenosyl-L-homocysteine + 4 H(+). Specifically dimethylates two adjacent adenosines (A1518 and A1519) in the loop of a conserved hairpin near the 3'-end of 16S rRNA in the 30S particle. May play a critical role in biogenesis of 30S subunits. The polypeptide is Ribosomal RNA small subunit methyltransferase A (Haemophilus influenzae (strain ATCC 51907 / DSM 11121 / KW20 / Rd)).